The primary structure comprises 568 residues: Proline--tRNA ligase (568 aa).

It belongs to the class-II aminoacyl-tRNA synthetase family. ProS type 1 subfamily. Homodimer.

It is found in the cytoplasm. The enzyme catalyses tRNA(Pro) + L-proline + ATP = L-prolyl-tRNA(Pro) + AMP + diphosphate. Functionally, catalyzes the attachment of proline to tRNA(Pro) in a two-step reaction: proline is first activated by ATP to form Pro-AMP and then transferred to the acceptor end of tRNA(Pro). As ProRS can inadvertently accommodate and process non-cognate amino acids such as alanine and cysteine, to avoid such errors it has two additional distinct editing activities against alanine. One activity is designated as 'pretransfer' editing and involves the tRNA(Pro)-independent hydrolysis of activated Ala-AMP. The other activity is designated 'posttransfer' editing and involves deacylation of mischarged Ala-tRNA(Pro). The misacylated Cys-tRNA(Pro) is not edited by ProRS. This chain is Proline--tRNA ligase, found in Listeria monocytogenes serovar 1/2a (strain ATCC BAA-679 / EGD-e).